Here is a 385-residue protein sequence, read N- to C-terminus: MKKIILVAGGTGGHFFPAVALGEELIKRGYIVHFITDLRCKKYINKDMKIIFYLLDLKRFSNILLFLPTLLIAFLKSIKLIYHIKSCVIIGFGGYPVIAPMFAAIFLRIPIIIHEQNSYLGKVNKFFARFAKKIAISYEDIKNVPEFAKSKIVLTGGIVRKNIRELDSFIYLASQHCPTKLTKTVLTNTLNHFVKARNNKFSNCNIFTLFIFGGSQGAKLFSELIPASIEILMKKQPNLELKIIQQASLAHQVKIKDIYSKLNITYEFAEFFDNIALQYKVANLVISRAGASTIEELTYIGLPTIFIPLPSAADNHQYYNAKLLADNKAGWCLEQNNISAEKLADQILDLISNRQLLEDAAQNLLNRKQEGHLLLSNLIEDTVFL.

Residues 11–13 (TGG), Asn-117, Arg-160, Ser-215, and Gln-317 each bind UDP-N-acetyl-alpha-D-glucosamine.

This sequence belongs to the glycosyltransferase 28 family. MurG subfamily.

It is found in the cell inner membrane. It catalyses the reaction di-trans,octa-cis-undecaprenyl diphospho-N-acetyl-alpha-D-muramoyl-L-alanyl-D-glutamyl-meso-2,6-diaminopimeloyl-D-alanyl-D-alanine + UDP-N-acetyl-alpha-D-glucosamine = di-trans,octa-cis-undecaprenyl diphospho-[N-acetyl-alpha-D-glucosaminyl-(1-&gt;4)]-N-acetyl-alpha-D-muramoyl-L-alanyl-D-glutamyl-meso-2,6-diaminopimeloyl-D-alanyl-D-alanine + UDP + H(+). The protein operates within cell wall biogenesis; peptidoglycan biosynthesis. In terms of biological role, cell wall formation. Catalyzes the transfer of a GlcNAc subunit on undecaprenyl-pyrophosphoryl-MurNAc-pentapeptide (lipid intermediate I) to form undecaprenyl-pyrophosphoryl-MurNAc-(pentapeptide)GlcNAc (lipid intermediate II). The protein is UDP-N-acetylglucosamine--N-acetylmuramyl-(pentapeptide) pyrophosphoryl-undecaprenol N-acetylglucosamine transferase of Rickettsia typhi (strain ATCC VR-144 / Wilmington).